A 232-amino-acid polypeptide reads, in one-letter code: Histone H1A (232 aa).

A compositionally biased stretch (low complexity) spans 1–18 (MSDPAVEVTPAVPVASPA). Disordered stretches follow at residues 1–42 (MSDP…THLP) and 98–232 (LQTK…AKKA). One can recognise an H15 domain in the interval 39–113 (THLPVSDMVV…GASGSFKLPA (75 aa)). Basic residues-rich tracts occupy residues 131–141 (KPKKAAAPKPK), 147–173 (KVKK…KTTK), 181–214 (AAKK…KAKK), and 222–232 (KAAKKPAAKKA).

It belongs to the histone H1/H5 family.

The protein localises to the nucleus. The protein resides in the chromosome. Its function is as follows. Histones H1 are necessary for the condensation of nucleosome chains into higher-order structures. In Chironomus tentans (Midge), this protein is Histone H1A.